The sequence spans 1413 residues: Leucine-rich repeat receptor protein kinase MSL1 (1413 aa).

Positions 1-23 are cleaved as a signal peptide; sequence MAPMLSIASRSPSPALIAPHASA. 2 N-linked (GlcNAc...) asparagine glycosylation sites follow: N153 and N192. 29 LRR repeats span residues 185–209, 210–233, 235–257, 258–281, 282–304, 306–329, 330–353, 354–377, 379–401, 402–425, 427–449, 450–473, 475–497, 498–518, 519–542, 543–565, 567–589, 590–613, 615–636, 637–661, 662–685, 687–709, 710–733, 745–769, 771–793, 794–817, 818–841, 843–866, and 868–890; these read FQSL…MVNL, QHLQ…LFDL, MLKV…IAHL, QQLT…LGSL, KNLE…SFSN, SRLL…IRAL, VNLV…LCQL, KNLQ…IGNL, QLEV…IGNL, EILE…VGEL, NLRQ…LGNC, KKLT…LADL, AVVL…IQNW, SNVS…PGLP, LHLV…ICQG, TFLQ…TFKG, KNLT…YLAL, LPLV…LWES, TILD…SIGK, LLSL…IGAL, RNLT…LFNC, NLVT…ISHL, TKLN…LCVA, VQHI…INNC, ILVE…LAEL, RNIT…PVPL, ASLQ…IGNI, PQIT…LLCK, and SLNH…CHED. Residues N304 and N317 are each glycosylated (N-linked (GlcNAc...) asparagine). N-linked (GlcNAc...) asparagine glycans are attached at residues N461, N496, and N499. N554, N568, and N601 each carry an N-linked (GlcNAc...) asparagine glycan. N-linked (GlcNAc...) asparagine glycans are attached at residues N663 and N697. N768 is a glycosylation site (N-linked (GlcNAc...) asparagine). N-linked (GlcNAc...) asparagine glycosylation occurs at N795. 4 N-linked (GlcNAc...) asparagine glycosylation sites follow: N878, N901, N917, and N928. 2 LRR repeats span residues 918-942 and 944-966; these read FTKL…IARV and SLYY…ICGM. N-linked (GlcNAc...) asparagine glycosylation is present at N973. The helical transmembrane segment at 1016–1036 threads the bilayer; that stretch reads TICCIATAIVIVLVVILVVYL. In terms of domain architecture, Protein kinase spans 1107-1401; the sequence is FDGMHVVGDG…IEAMEYGPLV (295 aa). Residues 1113-1121 and K1135 each bind ATP; that span reads VGDGGFGTV. The active-site Proton acceptor is D1234.

This sequence belongs to the protein kinase superfamily. Ser/Thr protein kinase family. As to expression, expressed in roots, leaves, shoots and spikelets.

The protein localises to the cell membrane. The catalysed reaction is L-seryl-[protein] + ATP = O-phospho-L-seryl-[protein] + ADP + H(+). It carries out the reaction L-threonyl-[protein] + ATP = O-phospho-L-threonyl-[protein] + ADP + H(+). Functionally, receptor-like kinase that may play a role male and female sporogenesis. This is Leucine-rich repeat receptor protein kinase MSL1 from Oryza sativa subsp. japonica (Rice).